The primary structure comprises 252 residues: Indole-3-glycerol phosphate synthase (252 aa).

Belongs to the TrpC family.

It catalyses the reaction 1-(2-carboxyphenylamino)-1-deoxy-D-ribulose 5-phosphate + H(+) = (1S,2R)-1-C-(indol-3-yl)glycerol 3-phosphate + CO2 + H2O. Its pathway is amino-acid biosynthesis; L-tryptophan biosynthesis; L-tryptophan from chorismate: step 4/5. In Listeria monocytogenes serotype 4a (strain HCC23), this protein is Indole-3-glycerol phosphate synthase.